Consider the following 144-residue polypeptide: NADH-ubiquinone oxidoreductase chain 6 (144 aa).

5 consecutive transmembrane segments (helical) span residues 1 to 21 (MIKLFFVLAIFSSIISYMNID), 25 to 45 (SSFFLIFSLLFSMPIISMSMH), 46 to 66 (IWFSYFICLLFLSGIFVILVY), 75 to 95 (VVKSYMSLFLLLISIIYFSPV), and 108 to 128 (FYYSIYWFIFSFILICLLFFM).

The protein belongs to the complex I subunit 6 family.

The protein resides in the mitochondrion membrane. The catalysed reaction is a ubiquinone + NADH + 5 H(+)(in) = a ubiquinol + NAD(+) + 4 H(+)(out). Functionally, core subunit of the mitochondrial membrane respiratory chain NADH dehydrogenase (Complex I) that is believed to belong to the minimal assembly required for catalysis. Complex I functions in the transfer of electrons from NADH to the respiratory chain. The immediate electron acceptor for the enzyme is believed to be ubiquinone. In Caenorhabditis briggsae, this protein is NADH-ubiquinone oxidoreductase chain 6 (nd6).